The sequence spans 2382 residues: Highly reducing polyketide synthase srdA (2382 aa).

The tract at residues 1–25 (MAPHSTLDSDYSSGSSTPTSASAAG) is disordered. The region spanning 44–474 (QEPIAIIGMG…GANAHAILEA (431 aa)) is the Ketosynthase family 3 (KS3) domain. Active-site for beta-ketoacyl synthase activity residues include cysteine 217, histidine 352, and histidine 390. Positions 580–891 (VFTGQGAQWP…HYGSALSRGK (312 aa)) are malonyl-CoA:ACP transacylase (MAT) domain. The active-site For malonyltransferase activity is the serine 672. Positions 971-1108 (HDLLGSQVHG…GLVKIDSAPA (138 aa)) are N-terminal hotdog fold. Positions 971–1274 (HDLLGSQVHG…RQVSYQSGIQ (304 aa)) are dehydratase (DH) domain. Residues 971–1275 (HDLLGSQVHG…QVSYQSGIQQ (305 aa)) form the PKS/mFAS DH domain. The Proton acceptor; for dehydratase activity role is filled by histidine 1003. A C-terminal hotdog fold region spans residues 1121-1275 (MEPQAPRTWY…QVSYQSGIQQ (155 aa)). Aspartate 1189 serves as the catalytic Proton donor; for dehydratase activity. The segment at 1668–1979 (GQIDSIFFRR…AKGHSGSVVV (312 aa)) is enoyl reductase (ER) domain. A ketoreductase (KR) domain region spans residues 2004 to 2180 (SYLLVGCLGG…ATSIGLGMIS (177 aa)). Residues 2298–2376 (SVEDAVLKMI…LLSELITKKM (79 aa)) enclose the Carrier domain. Serine 2335 carries the O-(pantetheine 4'-phosphoryl)serine modification.

Functionally, highly reducing polyketide synthase; part of the gene cluster that mediates the biosynthesis of sordarial, a salicylic aldehyde structurally related to the phytotoxin pyriculol. The most interesting aspect of this pathway is formation of an aromatic product from the highly reducing polyketide synthase srdA. SrdA synthesizes a reduced polyketide chain from one molecule of acetyl-CoA and five molecules of malonyl-CoA. The polyketide chain is then reductively released as an aldehyde. The oxidoreductases srdC, srdD and srdE then oxidize one of the hydroxy groups to facilitate the intramolecular aldol condensation, followed by dehydration to yield a salicylic aldehyde. This aldehyde can undergo facile reduction by endogenous reductases to yield the alcohol 1-hydroxy-2-hydroxymethyl-3-pent-1,3-dienylbenzene. The flavin-dependent srdI counteract against the propensity of the aldehydes to be reduced under physiological conditions and is responsible for reoxidizing 1-hydroxy-2-hydroxymethyl-3-pent-1,3-dienylbenzene back to the salicylic aldehyde. This salicylic aldehyde is then selectively epoxidized by the cupin-domain-containing oxidoreductase srdB to yield the epoxide, which can be hydrolyzed stereoselectively by the hydrolase srdG to give the final product sordarial. This is Highly reducing polyketide synthase srdA from Neurospora crassa (strain ATCC 24698 / 74-OR23-1A / CBS 708.71 / DSM 1257 / FGSC 987).